We begin with the raw amino-acid sequence, 114 residues long: Large ribosomal subunit protein uL22 (114 aa).

Belongs to the universal ribosomal protein uL22 family. Part of the 50S ribosomal subunit.

This protein binds specifically to 23S rRNA; its binding is stimulated by other ribosomal proteins, e.g. L4, L17, and L20. It is important during the early stages of 50S assembly. It makes multiple contacts with different domains of the 23S rRNA in the assembled 50S subunit and ribosome. Its function is as follows. The globular domain of the protein is located near the polypeptide exit tunnel on the outside of the subunit, while an extended beta-hairpin is found that lines the wall of the exit tunnel in the center of the 70S ribosome. This is Large ribosomal subunit protein uL22 from Streptococcus pyogenes serotype M6 (strain ATCC BAA-946 / MGAS10394).